We begin with the raw amino-acid sequence, 126 residues long: Actin-depolymerizing factor (126 aa).

The ADF-H domain maps to 1–126; the sequence is EDNCKLKFLE…SFDIIKSRAL (126 aa).

This sequence belongs to the actin-binding proteins ADF family. Preferentially in mature anther.

In terms of biological role, actin-depolymerizing protein. Severs actin filaments (F-actin) and binds to actin monomers. The protein is Actin-depolymerizing factor of Brassica napus (Rape).